Here is a 367-residue protein sequence, read N- to C-terminus: Queuine tRNA-ribosyltransferase (367 aa).

D92 (proton acceptor) is an active-site residue. Residues 92 to 96 (DSGGF), D146, Q188, and G215 contribute to the substrate site. The segment at 246–252 (GVGTPKD) is RNA binding. Catalysis depends on D265, which acts as the Nucleophile. C303, C305, C308, and H334 together coordinate Zn(2+).

It belongs to the queuine tRNA-ribosyltransferase family. As to quaternary structure, homodimer. Within each dimer, one monomer is responsible for RNA recognition and catalysis, while the other monomer binds to the replacement base PreQ1. The cofactor is Zn(2+).

The catalysed reaction is 7-aminomethyl-7-carbaguanine + guanosine(34) in tRNA = 7-aminomethyl-7-carbaguanosine(34) in tRNA + guanine. It participates in tRNA modification; tRNA-queuosine biosynthesis. In terms of biological role, catalyzes the base-exchange of a guanine (G) residue with the queuine precursor 7-aminomethyl-7-deazaguanine (PreQ1) at position 34 (anticodon wobble position) in tRNAs with GU(N) anticodons (tRNA-Asp, -Asn, -His and -Tyr). Catalysis occurs through a double-displacement mechanism. The nucleophile active site attacks the C1' of nucleotide 34 to detach the guanine base from the RNA, forming a covalent enzyme-RNA intermediate. The proton acceptor active site deprotonates the incoming PreQ1, allowing a nucleophilic attack on the C1' of the ribose to form the product. After dissociation, two additional enzymatic reactions on the tRNA convert PreQ1 to queuine (Q), resulting in the hypermodified nucleoside queuosine (7-(((4,5-cis-dihydroxy-2-cyclopenten-1-yl)amino)methyl)-7-deazaguanosine). The polypeptide is Queuine tRNA-ribosyltransferase (Francisella tularensis subsp. mediasiatica (strain FSC147)).